A 185-amino-acid polypeptide reads, in one-letter code: Large ribosomal subunit protein uL5 (185 aa).

The protein belongs to the universal ribosomal protein uL5 family. Part of the 50S ribosomal subunit; contacts the 5S rRNA and probably tRNA. Forms a bridge to the 30S subunit in the 70S ribosome.

In terms of biological role, this is one of the proteins that bind and probably mediate the attachment of the 5S RNA into the large ribosomal subunit, where it forms part of the central protuberance. In the 70S ribosome it contacts protein S13 of the 30S subunit (bridge B1b), connecting the 2 subunits; this bridge is implicated in subunit movement. May contact the P site tRNA; the 5S rRNA and some of its associated proteins might help stabilize positioning of ribosome-bound tRNAs. The protein is Large ribosomal subunit protein uL5 of Haloquadratum walsbyi (strain DSM 16790 / HBSQ001).